We begin with the raw amino-acid sequence, 162 residues long: Blue copper protein 1b (162 aa).

An N-terminal signal peptide occupies residues 1–23 (MASSRVVLILSISMVLLSSVAIA). The region spanning 25–125 (TDYIVGDDKG…QMKLVITVLA (101 aa)) is the Phytocyanin domain. Residue H65 participates in Cu cation binding. N-linked (GlcNAc...) asparagine glycosylation is present at N71. C78 and C112 are oxidised to a cystine. Cu cation-binding residues include C106, H111, and M117. Residues 142-162 (VVSSLFGVVMAIMVAIAVIFA) form a helical membrane-spanning segment.

It is found in the membrane. The sequence is that of Blue copper protein 1b from Medicago truncatula (Barrel medic).